The sequence spans 364 residues: Uroporphyrinogen decarboxylase (364 aa).

Residues 28-32 (RQAGR), Asp-78, Tyr-160, Thr-215, and His-333 each bind substrate.

This sequence belongs to the uroporphyrinogen decarboxylase family. In terms of assembly, homodimer.

It is found in the cytoplasm. The catalysed reaction is uroporphyrinogen III + 4 H(+) = coproporphyrinogen III + 4 CO2. It participates in porphyrin-containing compound metabolism; protoporphyrin-IX biosynthesis; coproporphyrinogen-III from 5-aminolevulinate: step 4/4. Its function is as follows. Catalyzes the decarboxylation of four acetate groups of uroporphyrinogen-III to yield coproporphyrinogen-III. The polypeptide is Uroporphyrinogen decarboxylase (Burkholderia pseudomallei (strain 668)).